A 403-amino-acid polypeptide reads, in one-letter code: Multifunctional CCA protein (403 aa).

Residues Gly-8 and Arg-11 each coordinate ATP. CTP is bound by residues Gly-8 and Arg-11. Mg(2+) contacts are provided by Asp-21 and Asp-23. Residues Arg-91, Arg-137, and Arg-140 each coordinate ATP. The CTP site is built by Arg-91, Arg-137, and Arg-140. Residues 228–329 (TGIHTLMVAK…LKVLGLLDVW (102 aa)) enclose the HD domain.

The protein belongs to the tRNA nucleotidyltransferase/poly(A) polymerase family. Bacterial CCA-adding enzyme type 1 subfamily. Monomer. Can also form homodimers and oligomers. Mg(2+) serves as cofactor. The cofactor is Ni(2+).

It carries out the reaction a tRNA precursor + 2 CTP + ATP = a tRNA with a 3' CCA end + 3 diphosphate. The enzyme catalyses a tRNA with a 3' CCA end + 2 CTP + ATP = a tRNA with a 3' CCACCA end + 3 diphosphate. Its function is as follows. Catalyzes the addition and repair of the essential 3'-terminal CCA sequence in tRNAs without using a nucleic acid template. Adds these three nucleotides in the order of C, C, and A to the tRNA nucleotide-73, using CTP and ATP as substrates and producing inorganic pyrophosphate. tRNA 3'-terminal CCA addition is required both for tRNA processing and repair. Also involved in tRNA surveillance by mediating tandem CCA addition to generate a CCACCA at the 3' terminus of unstable tRNAs. While stable tRNAs receive only 3'-terminal CCA, unstable tRNAs are marked with CCACCA and rapidly degraded. The protein is Multifunctional CCA protein of Vibrio cholerae serotype O1 (strain ATCC 39541 / Classical Ogawa 395 / O395).